The chain runs to 120 residues: Large ribosomal subunit protein uL29 (120 aa).

This sequence belongs to the universal ribosomal protein uL29 family. In terms of assembly, component of the large ribosomal subunit. Mature ribosomes consist of a small (40S) and a large (60S) subunit. The 40S subunit contains about 32 different proteins and 1 molecule of RNA (18S). The 60S subunit contains 45 different proteins and 3 molecules of RNA (25S, 5.8S and 5S).

It is found in the cytoplasm. Its function is as follows. Component of the ribosome, a large ribonucleoprotein complex responsible for the synthesis of proteins in the cell. The small ribosomal subunit (SSU) binds messenger RNAs (mRNAs) and translates the encoded message by selecting cognate aminoacyl-transfer RNA (tRNA) molecules. The large subunit (LSU) contains the ribosomal catalytic site termed the peptidyl transferase center (PTC), which catalyzes the formation of peptide bonds, thereby polymerizing the amino acids delivered by tRNAs into a polypeptide chain. The nascent polypeptides leave the ribosome through a tunnel in the LSU and interact with protein factors that function in enzymatic processing, targeting, and the membrane insertion of nascent chains at the exit of the ribosomal tunnel. The protein is Large ribosomal subunit protein uL29 of Candida albicans (strain SC5314 / ATCC MYA-2876) (Yeast).